The following is a 53-amino-acid chain: uncharacterized protein (53 aa).

Residues 24–44 (LMTFIAVNAVLSLILIRAVIL) form a helical membrane-spanning segment.

The protein localises to the membrane. This is an uncharacterized protein from Methanocaldococcus jannaschii (strain ATCC 43067 / DSM 2661 / JAL-1 / JCM 10045 / NBRC 100440) (Methanococcus jannaschii).